Reading from the N-terminus, the 668-residue chain is UvrABC system protein B (668 aa).

A Helicase ATP-binding domain is found at 31 to 416 (QGITDGVPAQ…RGHIIEQIIR (386 aa)). 44–51 (GTTGSGKT) serves as a coordination point for ATP. Positions 97–120 (YYDYYQPEAYIARSDTYIEKSLLI) match the Beta-hairpin motif. One can recognise a Helicase C-terminal domain in the interval 433 to 596 (QIDDLLEEIR…ITPQPIIKPI (164 aa)). The UVR domain maps to 621 to 656 (EASIKTYEEAMYQAAQEFQFDEAVKYRDLMNAAKKQ).

This sequence belongs to the UvrB family. Forms a heterotetramer with UvrA during the search for lesions. Interacts with UvrC in an incision complex.

It localises to the cytoplasm. In terms of biological role, the UvrABC repair system catalyzes the recognition and processing of DNA lesions. A damage recognition complex composed of 2 UvrA and 2 UvrB subunits scans DNA for abnormalities. Upon binding of the UvrA(2)B(2) complex to a putative damaged site, the DNA wraps around one UvrB monomer. DNA wrap is dependent on ATP binding by UvrB and probably causes local melting of the DNA helix, facilitating insertion of UvrB beta-hairpin between the DNA strands. Then UvrB probes one DNA strand for the presence of a lesion. If a lesion is found the UvrA subunits dissociate and the UvrB-DNA preincision complex is formed. This complex is subsequently bound by UvrC and the second UvrB is released. If no lesion is found, the DNA wraps around the other UvrB subunit that will check the other stand for damage. In Chlamydia trachomatis serovar A (strain ATCC VR-571B / DSM 19440 / HAR-13), this protein is UvrABC system protein B.